Reading from the N-terminus, the 301-residue chain is GTPase Era (301 aa).

In terms of domain architecture, Era-type G spans 7–175; that stretch reads YCGFIAIVGR…AAIVRKHLPE (169 aa). The tract at residues 15-22 is G1; that stretch reads GRPNVGKS. 15 to 22 provides a ligand contact to GTP; the sequence is GRPNVGKS. A G2 region spans residues 41 to 45; sequence QTTRH. The segment at 62–65 is G3; the sequence is DTPG. GTP is bound by residues 62-66 and 124-127; these read DTPGL and NKVD. Positions 124-127 are G4; it reads NKVD. A G5 region spans residues 154–156; sequence ISA. Positions 206–283 constitute a KH type-2 domain; the sequence is LGAELPYSVT…HLELWVKVKS (78 aa).

Belongs to the TRAFAC class TrmE-Era-EngA-EngB-Septin-like GTPase superfamily. Era GTPase family. In terms of assembly, monomer.

It is found in the cytoplasm. It localises to the cell inner membrane. An essential GTPase that binds both GDP and GTP, with rapid nucleotide exchange. Plays a role in 16S rRNA processing and 30S ribosomal subunit biogenesis and possibly also in cell cycle regulation and energy metabolism. The polypeptide is GTPase Era (Shigella flexneri).